The chain runs to 316 residues: Acetaldehyde dehydrogenase (316 aa).

11–14 (SGNI) lines the NAD(+) pocket. Cys131 (acyl-thioester intermediate) is an active-site residue. NAD(+) contacts are provided by residues 162–170 (SAGPGTRAN) and Asn289.

This sequence belongs to the acetaldehyde dehydrogenase family. As to quaternary structure, interacts with MhpE.

It catalyses the reaction acetaldehyde + NAD(+) + CoA = acetyl-CoA + NADH + H(+). It functions in the pathway aromatic compound metabolism; 3-phenylpropanoate degradation. Catalyzes the conversion of acetaldehyde to acetyl-CoA, using NAD(+) and coenzyme A. Is the final enzyme in the meta-cleavage pathway for the degradation of aromatic compounds. The chain is Acetaldehyde dehydrogenase from Escherichia coli O81 (strain ED1a).